Consider the following 154-residue polypeptide: Interleukin-2 (154 aa).

The N-terminal stretch at 1–20 (MCKMQLLSCIALSLVLVANS) is a signal peptide. The O-linked (GalNAc...) threonine glycan is linked to threonine 23. Cysteine 78 and cysteine 126 are joined by a disulfide.

Belongs to the IL-2 family.

The protein localises to the secreted. In terms of biological role, cytokine produced by activated CD4-positive helper T-cells and to a lesser extend activated CD8-positive T-cells and natural killer (NK) cells that plays pivotal roles in the immune response and tolerance. Binds to a receptor complex composed of either the high-affinity trimeric IL-2R (IL2RA/CD25, IL2RB/CD122 and IL2RG/CD132) or the low-affinity dimeric IL-2R (IL2RB and IL2RG). Interaction with the receptor leads to oligomerization and conformation changes in the IL-2R subunits resulting in downstream signaling starting with phosphorylation of JAK1 and JAK3. In turn, JAK1 and JAK3 phosphorylate the receptor to form a docking site leading to the phosphorylation of several substrates including STAT5. This process leads to activation of several pathways including STAT, phosphoinositide-3-kinase/PI3K and mitogen-activated protein kinase/MAPK pathways. Functions as a T-cell growth factor and can increase NK-cell cytolytic activity as well. Promotes strong proliferation of activated B-cells and subsequently immunoglobulin production. Plays a pivotal role in regulating the adaptive immune system by controlling the survival and proliferation of regulatory T-cells, which are required for the maintenance of immune tolerance. Moreover, participates in the differentiation and homeostasis of effector T-cell subsets, including Th1, Th2, Th17 as well as memory CD8-positive T-cells. The sequence is that of Interleukin-2 (IL2) from Mirounga angustirostris (Northern elephant seal).